Reading from the N-terminus, the 295-residue chain is MNDSRYIGRFAPTPSGFLHFGSLVAALASWLDARAVNGRWLLRMEDTDPPREMPGARDAILQTLERYGLEWDGEVVFQSQRHEAYAAVVDRLFNMGLAYACTCSRKQLEGYDGIYPGFCRNAGHAREGAAIRLRVPELIYRFSDRVQGAFEQHLGREVGDFVIQRRDGLYAYQLAVVLDDAWQGVTDIVRGADLLDNTPRQLYLQELLGFSQPRYLHIPLIVQPDGHKLGKSYRSPPLEADQATPLLLRALRALGQQADPALIGASPAEVLAVARQQWQPDNIARQMTVPEADLR.

Residues arginine 9–threonine 13 and glutamate 45 contribute to the L-glutamate site. The 'HIGH' region motif lies at proline 12–serine 22. Zn(2+)-binding residues include cysteine 101, cysteine 103, tyrosine 115, and cysteine 119. Tyrosine 172 and arginine 190 together coordinate L-glutamate. Positions lysine 228–serine 232 match the 'KMSKS' region motif. Lysine 231 serves as a coordination point for ATP.

This sequence belongs to the class-I aminoacyl-tRNA synthetase family. GluQ subfamily. The cofactor is Zn(2+).

Its function is as follows. Catalyzes the tRNA-independent activation of glutamate in presence of ATP and the subsequent transfer of glutamate onto a tRNA(Asp). Glutamate is transferred on the 2-amino-5-(4,5-dihydroxy-2-cyclopenten-1-yl) moiety of the queuosine in the wobble position of the QUC anticodon. The polypeptide is Glutamyl-Q tRNA(Asp) synthetase (Pseudomonas entomophila (strain L48)).